A 185-amino-acid polypeptide reads, in one-letter code: Ribosome-recycling factor (185 aa).

It belongs to the RRF family.

Its subcellular location is the cytoplasm. Its function is as follows. Responsible for the release of ribosomes from messenger RNA at the termination of protein biosynthesis. May increase the efficiency of translation by recycling ribosomes from one round of translation to another. In Azotobacter vinelandii (strain DJ / ATCC BAA-1303), this protein is Ribosome-recycling factor.